A 166-amino-acid chain; its full sequence is Orotate phosphoribosyltransferase (166 aa).

5-phospho-alpha-D-ribose 1-diphosphate-binding positions include Arg-83, Lys-84, Arg-86, His-88, and 108–116 (EDVVTTGNS). 2 residues coordinate orotate: Thr-112 and Arg-140.

This sequence belongs to the purine/pyrimidine phosphoribosyltransferase family. PyrE subfamily. In terms of assembly, homodimer. The cofactor is Mg(2+).

It catalyses the reaction orotidine 5'-phosphate + diphosphate = orotate + 5-phospho-alpha-D-ribose 1-diphosphate. The protein operates within pyrimidine metabolism; UMP biosynthesis via de novo pathway; UMP from orotate: step 1/2. Functionally, catalyzes the transfer of a ribosyl phosphate group from 5-phosphoribose 1-diphosphate to orotate, leading to the formation of orotidine monophosphate (OMP). This Thermoplasma volcanium (strain ATCC 51530 / DSM 4299 / JCM 9571 / NBRC 15438 / GSS1) protein is Orotate phosphoribosyltransferase.